Reading from the N-terminus, the 544-residue chain is CTP synthase (544 aa).

An amidoligase domain region spans residues 1 to 266; that stretch reads MTKFIFVTGG…DDLICERFGL (266 aa). Position 13 (Ser13) interacts with CTP. UTP is bound at residue Ser13. Residues 14 to 19 and Asp71 each bind ATP; that span reads SLGKGI. Positions 71 and 140 each coordinate Mg(2+). Residues 147–149, 187–192, and Lys223 contribute to the CTP site; these read DIE and KTKPTQ. UTP-binding positions include 187 to 192 and Lys223; that span reads KTKPTQ. Positions 291–543 constitute a Glutamine amidotransferase type-1 domain; the sequence is TVAMVGKYVE…VKAAKNYSEA (253 aa). Residue Gly354 coordinates L-glutamine. Cys381 functions as the Nucleophile; for glutamine hydrolysis in the catalytic mechanism. Residues 382–385, Glu404, and Arg471 contribute to the L-glutamine site; that span reads LGMQ. Residues His516 and Glu518 contribute to the active site.

The protein belongs to the CTP synthase family. Homotetramer.

The catalysed reaction is UTP + L-glutamine + ATP + H2O = CTP + L-glutamate + ADP + phosphate + 2 H(+). It carries out the reaction L-glutamine + H2O = L-glutamate + NH4(+). It catalyses the reaction UTP + NH4(+) + ATP = CTP + ADP + phosphate + 2 H(+). Its pathway is pyrimidine metabolism; CTP biosynthesis via de novo pathway; CTP from UDP: step 2/2. Allosterically activated by GTP, when glutamine is the substrate; GTP has no effect on the reaction when ammonia is the substrate. The allosteric effector GTP functions by stabilizing the protein conformation that binds the tetrahedral intermediate(s) formed during glutamine hydrolysis. Inhibited by the product CTP, via allosteric rather than competitive inhibition. Functionally, catalyzes the ATP-dependent amination of UTP to CTP with either L-glutamine or ammonia as the source of nitrogen. Regulates intracellular CTP levels through interactions with the four ribonucleotide triphosphates. The chain is CTP synthase from Psychrobacter arcticus (strain DSM 17307 / VKM B-2377 / 273-4).